Reading from the N-terminus, the 168-residue chain is MLEPDDIALFRGAVKGVKALKQDKFIAPRQKMSKKKSTLRDIREKEDTLFYFSDEYEPLLNEESAVRYLREGEDSHILKQLRRGDFSPELFLDLHGLTKEQAKIELASLLQACENEHVYCASVMTGYGSYILKRQIPRWLVQHPKVRALHQAPKAWGGDAAILILFEV.

The 76-residue stretch at 92 to 167 (LDLHGLTKEQ…GDAAILILFE (76 aa)) folds into the Smr domain.

This sequence belongs to the SmrB family. Associates with collided ribosomes, but not with correctly translating polysomes.

Acts as a ribosome collision sensor. Detects stalled/collided disomes (pairs of ribosomes where the leading ribosome is stalled and a second ribosome has collided with it) and endonucleolytically cleaves mRNA at the 5' boundary of the stalled ribosome. Stalled/collided disomes form a new interface (primarily via the 30S subunits) that binds SmrB. Cleaved mRNA becomes available for tmRNA ligation, leading to ribosomal subunit dissociation and rescue of stalled ribosomes. This is Ribosome rescue factor SmrB from Pasteurella multocida (strain Pm70).